Consider the following 943-residue polypeptide: Isoleucine--tRNA ligase (943 aa).

Positions 59 to 69 match the 'HIGH' region motif; sequence PYANGQIHLGH. Glu577 is an L-isoleucyl-5'-AMP binding site. Positions 618 to 622 match the 'KMSKS' region motif; the sequence is KMSKS. Lys621 lines the ATP pocket. Positions 906, 909, 926, and 929 each coordinate Zn(2+).

The protein belongs to the class-I aminoacyl-tRNA synthetase family. IleS type 1 subfamily. As to quaternary structure, monomer. The cofactor is Zn(2+).

The protein localises to the cytoplasm. The catalysed reaction is tRNA(Ile) + L-isoleucine + ATP = L-isoleucyl-tRNA(Ile) + AMP + diphosphate. In terms of biological role, catalyzes the attachment of isoleucine to tRNA(Ile). As IleRS can inadvertently accommodate and process structurally similar amino acids such as valine, to avoid such errors it has two additional distinct tRNA(Ile)-dependent editing activities. One activity is designated as 'pretransfer' editing and involves the hydrolysis of activated Val-AMP. The other activity is designated 'posttransfer' editing and involves deacylation of mischarged Val-tRNA(Ile). This Xanthomonas oryzae pv. oryzae (strain MAFF 311018) protein is Isoleucine--tRNA ligase.